Here is a 217-residue protein sequence, read N- to C-terminus: Cytidylate kinase (217 aa).

An ATP-binding site is contributed by 9-17 (GPSSSGKSS).

This sequence belongs to the cytidylate kinase family. Type 1 subfamily.

It localises to the cytoplasm. It carries out the reaction CMP + ATP = CDP + ADP. The enzyme catalyses dCMP + ATP = dCDP + ADP. The protein is Cytidylate kinase of Mycoplasma pneumoniae (strain ATCC 29342 / M129 / Subtype 1) (Mycoplasmoides pneumoniae).